A 177-amino-acid polypeptide reads, in one-letter code: Small ribosomal subunit protein bS16 (177 aa).

A disordered region spans residues 80 to 177 (GIIAMPANGS…AAEAPKEEAK (98 aa)). Residues 107 to 122 (AAPAAAPKAEAAPAAE) show a composition bias toward low complexity.

Belongs to the bacterial ribosomal protein bS16 family.

The protein is Small ribosomal subunit protein bS16 of Pelagibacter ubique (strain HTCC1062).